Here is a 429-residue protein sequence, read N- to C-terminus: Metacaspase-1A (429 aa).

Residues 1 to 68 (MQHHHQGSYG…PQHNGGQMYG (68 aa)) are disordered. Over residues 8-19 (SYGGGGGGGGYP) the composition is skewed to gly residues. The span at 20–45 (GQAYREQNPYGYGQQSPQQGYGAPQQ) shows a compositional bias: low complexity. A compositionally biased stretch (polar residues) spans 46 to 62 (HNGYNQPPSGYGQPQHN). Active-site residues include His-220 and Cys-276.

It belongs to the peptidase C14B family.

Its function is as follows. Involved in cell death (apoptosis). The chain is Metacaspase-1A (casA) from Aspergillus clavatus (strain ATCC 1007 / CBS 513.65 / DSM 816 / NCTC 3887 / NRRL 1 / QM 1276 / 107).